A 400-amino-acid polypeptide reads, in one-letter code: Zinc finger protein 514 (400 aa).

Residues 1–72 (MTFEDVAVEF…EREISTGAHS (72 aa)) enclose the KRAB domain. 7 consecutive C2H2-type zinc fingers follow at residues 204–226 (CKCNECGKSFHFQSELRRHQRCH), 232–254 (YECSDCGRAFGHISSLIKHQRTH), 260–282 (YECSECGRAFSQSSSLVLHYRFH), 288–310 (YKCNECGRAFGHTSSLIKHQRTH), 316–338 (YECRECGRTFSQSSSLIVHYRFH), 344–366 (YKCNKCGRAFSQSSSLTQHYRFH), and 372–394 (YKCNECGRAFAHTASLIKHQRSH).

This sequence belongs to the krueppel C2H2-type zinc-finger protein family.

The protein resides in the nucleus. May be involved in transcriptional regulation. In Homo sapiens (Human), this protein is Zinc finger protein 514 (ZNF514).